The sequence spans 690 residues: Cyclic nucleotide-gated channel alpha-1 (690 aa).

At 1 to 163 the chain is on the cytoplasmic side; sequence MKKVIINTWH…VVIDPSGNTY (163 aa). Disordered regions lie at residues 33–76 and 88–151; these read GACS…PSQR and NVNN…EEKK. The span at 40–54 shows a compositional bias: acidic residues; it reads GDDDDSASMFEESET. The segment covering 64–76 has biased composition (polar residues); the sequence is RSNTHGSGQPSQR. Over residues 111–151 the composition is skewed to basic and acidic residues; sequence SKPDDKNENKKDPEKKKKKEKDKDKKKKEEKGKDKKEEEKK. Residues 164–185 traverse the membrane as a helical segment; the sequence is YNWLFCITLPVMYNWTMIIARA. Residues 186 to 195 lie on the Extracellular side of the membrane; the sequence is CFDELQSDYL. The chain crosses the membrane as a helical span at residues 196-215; it reads EYWLAFDYLSDVVYLLDMFV. Over 216–241 the chain is Cytoplasmic; sequence RTRTGYLEQGLLVKEERKLIDKYKST. Residues 242–251 form a helical membrane-spanning segment; the sequence is FQFKLDVLSV. Residues 252–264 lie on the Extracellular side of the membrane; sequence IPTDLLYIKFGWN. A helical membrane pass occupies residues 265-283; the sequence is YPEIRLNRLLRISRMFEFF. Residues 284–291 are Cytoplasmic-facing; sequence QRTETRTN. A helical transmembrane segment spans residues 292–315; that stretch reads YPNIFRISNLVMYIIIIIHWNACV. Residues 293–402 form an ion conduction pathway region; it reads PNIFRISNLV…NIGSMISNMN (110 aa). Residues 316–342 lie on the Extracellular side of the membrane; it reads YFSISKAIGFGNDTWVYPDVNDPDFGR. N-linked (GlcNAc...) asparagine glycosylation occurs at asparagine 327. 2 helical membrane passes run 343–373 and 374–399; these read LARKYVYSLYWSTLTLTTIGETPPPVRDSEY and FFVVADFLIGVLIFATIVGNIGSMIS. The tract at residues 360 to 363 is selectivity filter; that stretch reads TIGE. At 400–690 the chain is on the cytoplasmic side; it reads NMNAARAEFQ…ESGPTDSTQD (291 aa). The tract at residues 403–479 is C-linker; sequence AARAEFQARI…DTLKKVRIFA (77 aa). The tract at residues 482–603 is cyclic nucleotide-binding domain (CNBD); that stretch reads EAGLLVELVL…EEKGKQILMK (122 aa). Glycine 543, serine 546, arginine 559, and threonine 560 together coordinate 3',5'-cyclic GMP. Arginine 559 and threonine 560 together coordinate 3',5'-cyclic AMP. Positions 621-664 form a coiled coil; that stretch reads LEEKVTRMESSVDLLQTRFARILAEYESMQQKLKQRLTKVEKFL.

The protein belongs to the cyclic nucleotide-gated cation channel (TC 1.A.1.5) family. CNGA1 subfamily. As to quaternary structure, forms a heterotetramer with CNGB1 in a 3:1 ratio. May also form cyclic nucleotide-activated homotetrameric channels, that are efficiently activated by saturating cGMP, but poorly activated by saturating cAMP compared to the heterotetramer with CNGB1. The channel binds Ca(2+)-bound CALM1 via CaM1 and CaM2 regions of the CNGB1 subunit; this interaction modulates the affinity of the channel for cNMPs in response to intracellular Ca(2+) levels. In terms of tissue distribution, expressed in the retina, in rod cells (at protein level).

It localises to the cell membrane. It catalyses the reaction Ca(2+)(in) = Ca(2+)(out). The enzyme catalyses Na(+)(in) = Na(+)(out). It carries out the reaction K(+)(in) = K(+)(out). The catalysed reaction is NH4(+)(in) = NH4(+)(out). It catalyses the reaction Rb(+)(in) = Rb(+)(out). The enzyme catalyses Li(+)(in) = Li(+)(out). It carries out the reaction Cs(+)(in) = Cs(+)(out). Pore-forming subunit of the rod cyclic nucleotide-gated channel. Mediates rod photoresponses at dim light converting transient changes in intracellular cGMP levels into electrical signals. In the dark, cGMP levels are high and keep the channel open enabling a steady inward current carried by Na(+) and Ca(2+) ions that leads to membrane depolarization and neurotransmitter release from synaptic terminals. Upon photon absorption cGMP levels decline leading to channel closure and membrane hyperpolarization that ultimately slows neurotransmitter release and signals the presence of light, the end point of the phototransduction cascade. Conducts cGMP- and cAMP-gated ion currents, with permeability for monovalent and divalent cations. The selectivity for Ca(2+) over Na(+) increases with cGMP concentrations, whereas the selectivity among monovalent ions is independent of the cGMP levels. The sequence is that of Cyclic nucleotide-gated channel alpha-1 from Bos taurus (Bovine).